Here is a 473-residue protein sequence, read N- to C-terminus: Vasculin (473 aa).

Disordered stretches follow at residues 1 to 26 (MAQHDFAPAWLNFPTPPSSTKSSLNF), 44 to 163 (RRRH…EYPP), 196 to 240 (SQPV…SFPH), 258 to 286 (NFSPSTTSVKECNRSNSSSPVDKLNQQPR), and 305 to 342 (LKRDRVEEEHEDESHVGSEKDDDSFNLHNSNSTHQERD). The residue at position 49 (serine 49) is a Phosphoserine. Arginine 87 carries the omega-N-methylarginine modification. Over residues 93 to 107 (GSSRSRSSIFHSGKS) the composition is skewed to low complexity. Residues 119 to 133 (ETGRKDDKRERKQFE) are compositionally biased toward basic and acidic residues. Phosphoserine occurs at positions 274, 276, 322, and 381. Residues 305–329 (LKRDRVEEEHEDESHVGSEKDDDSF) are compositionally biased toward basic and acidic residues. Positions 444 to 473 (GPWKNSTFKPTIENDDTETSSSDTSDDDDV) are disordered. Over residues 456 to 473 (ENDDTETSSSDTSDDDDV) the composition is skewed to acidic residues.

The protein belongs to the vasculin family. Interacts with GTF2B, GTF2F2, RNA polymerase II and TBP.

The protein resides in the nucleus. Functions as a GC-rich promoter-specific transactivating transcription factor. This chain is Vasculin (GPBP1), found in Bos taurus (Bovine).